The following is a 222-amino-acid chain: Transmembrane reductase CYB561D2 (222 aa).

Residues 2–17 (ALSVETESHIYRALRT) are Cytoplasmic-facing. The Cytochrome b561 domain occupies 14 to 217 (ALRTVSGAAA…NQVSNAYLYR (204 aa)). Residues 18–38 (VSGAAAHLVALGFTIFVAVLA) form a helical membrane-spanning segment. The Lumenal portion of the chain corresponds to 39 to 46 (RPGSSLFS). A helical transmembrane segment spans residues 47 to 67 (WHPVLMSLAFSFLMTEALLVF). A heme b-binding site is contributed by histidine 48. Residues 68-85 (SPESSLLRSLSRKGRARC) lie on the Cytoplasmic side of the membrane. Heme b is bound by residues histidine 86 and histidine 120. Residues 86 to 106 (HWVLQLLALLCALLGLGLVIL) form a helical membrane-spanning segment. The Lumenal segment spans residues 107 to 122 (HKEQLGKAHLATWHGR). The chain crosses the membrane as a helical span at residues 123–143 (AGLLAVLWAGLQCSGGVGLLY). At 144-162 (PKLLPRWPLAKLKLYHATS) the chain is on the cytoplasmic side. Heme b is bound at residue histidine 159. A helical transmembrane segment spans residues 163–183 (GLVGYLLGGASLLLGMCSLWF). The Lumenal portion of the chain corresponds to 184–186 (TAT). The chain crosses the membrane as a helical span at residues 187–207 (VTGGVWYLAVLCPVITSLVIM). The Cytoplasmic portion of the chain corresponds to 208–222 (NQVSNAYLYRKRIQP).

The cofactor is heme b.

The protein resides in the endoplasmic reticulum membrane. It is found in the cytoplasmic vesicle membrane. The catalysed reaction is monodehydro-L-ascorbate radical(out) + L-ascorbate(in) = monodehydro-L-ascorbate radical(in) + L-ascorbate(out). The enzyme catalyses Fe(3+)(out) + L-ascorbate(in) = monodehydro-L-ascorbate radical(in) + Fe(2+)(out) + H(+). In terms of biological role, transmembrane reductase that may use ascorbate as an electron donor in the cytoplasm and transfer electrons across endoplasmic reticulum membranes to reduce monodehydro-L-ascorbate radical and iron cations Fe(3+) in the lumen of that compartment. This Bos taurus (Bovine) protein is Transmembrane reductase CYB561D2.